A 213-amino-acid chain; its full sequence is Embryo-specific protein ATS3 (213 aa).

Residues 1 to 21 form the signal peptide; it reads MTFPSLSVSFLFFAFIFVTHA. Residues 34-148 form the PLAT domain; sequence CPYTVVVMTS…LNTWYGHNNC (115 aa). Positions 147–188 are disordered; the sequence is NCNTTGRPSSPDLPPPHFPPEFPPETPTTPPPPPPRPSAASR. N-linked (GlcNAc...) asparagine glycosylation is present at asparagine 149. Residues 157–183 show a composition bias toward pro residues; sequence PDLPPPHFPPEFPPETPTTPPPPPPRP.

In terms of tissue distribution, expressed in seeds. Expression is restricted to the developing embryo.

The protein resides in the secreted. Its function is as follows. May play a role during embryo development. This is Embryo-specific protein ATS3 from Arabidopsis thaliana (Mouse-ear cress).